The following is a 412-amino-acid chain: uncharacterized protein (412 aa).

H49 serves as a coordination point for Zn(2+). E52 (proton acceptor) is an active-site residue. Residues H53 and E129 each coordinate Zn(2+).

This sequence belongs to the peptidase M16 family. It depends on Zn(2+) as a cofactor.

This is an uncharacterized protein from Rickettsia bellii (strain RML369-C).